Reading from the N-terminus, the 425-residue chain is 1,4-beta-D-glucan glucohydrolase (425 aa).

Glu-164 functions as the Proton donor in the catalytic mechanism. The active-site Nucleophile is Glu-349.

This sequence belongs to the glycosyl hydrolase 1 family. In terms of assembly, monomer.

The catalysed reaction is Hydrolysis of (1-&gt;4)-linkages in (1-&gt;4)-beta-D-glucans, to remove successive glucose units.. The enzyme catalyses Hydrolysis of terminal, non-reducing beta-D-glucosyl residues with release of beta-D-glucose.. The protein operates within glycan metabolism; cellulose degradation. Its pathway is glycan metabolism; beta-D-glucan degradation. Broad substrate specificity glycosidase. Releases glucose from soluble glucooligomers, with a preference for longer oligomers; acts more readily on cellotetraose than on cellobiose. Displays similar activities towards the disaccharides lactose and cellobiose. Is also able to hydrolyze various aryl-beta-glycosides in vitro. This is 1,4-beta-D-glucan glucohydrolase (bglA) from Thermotoga neapolitana.